Here is a 779-residue protein sequence, read N- to C-terminus: Endonuclease MutS2 (779 aa).

328–335 contacts ATP; sequence GPNTGGKT. A Smr domain is found at 704–779; the sequence is LDLRGKRYEE…GSGATIVTLG (76 aa).

It belongs to the DNA mismatch repair MutS family. MutS2 subfamily. In terms of assembly, homodimer. Binds to stalled ribosomes, contacting rRNA.

Endonuclease that is involved in the suppression of homologous recombination and thus may have a key role in the control of bacterial genetic diversity. Its function is as follows. Acts as a ribosome collision sensor, splitting the ribosome into its 2 subunits. Detects stalled/collided 70S ribosomes which it binds and splits by an ATP-hydrolysis driven conformational change. Acts upstream of the ribosome quality control system (RQC), a ribosome-associated complex that mediates the extraction of incompletely synthesized nascent chains from stalled ribosomes and their subsequent degradation. Probably generates substrates for RQC. The sequence is that of Endonuclease MutS2 from Streptococcus pyogenes serotype M5 (strain Manfredo).